The sequence spans 399 residues: Probable aspartate/prephenate aminotransferase (399 aa).

L-aspartate-binding residues include Gly39, Trp125, and Asn175. Lys239 carries the N6-(pyridoxal phosphate)lysine modification. Arg375 is a binding site for L-aspartate.

This sequence belongs to the class-I pyridoxal-phosphate-dependent aminotransferase family. Homodimer. It depends on pyridoxal 5'-phosphate as a cofactor.

The protein localises to the cytoplasm. It carries out the reaction L-aspartate + 2-oxoglutarate = oxaloacetate + L-glutamate. The enzyme catalyses L-arogenate + 2-oxoglutarate = prephenate + L-glutamate. Functionally, catalyzes the reversible conversion of aspartate and 2-oxoglutarate to glutamate and oxaloacetate. Can also transaminate prephenate in the presence of glutamate. The protein is Probable aspartate/prephenate aminotransferase (aatA) of Rickettsia typhi (strain ATCC VR-144 / Wilmington).